The chain runs to 159 residues: Putative 4-hydroxy-4-methyl-2-oxoglutarate aldolase (159 aa).

Substrate contacts are provided by residues 78–81 (GDVI) and R100. A divalent metal cation is bound at residue D101.

The protein belongs to the class II aldolase/RraA-like family. In terms of assembly, homotrimer. It depends on a divalent metal cation as a cofactor.

It catalyses the reaction 4-hydroxy-4-methyl-2-oxoglutarate = 2 pyruvate. The catalysed reaction is oxaloacetate + H(+) = pyruvate + CO2. In terms of biological role, catalyzes the aldol cleavage of 4-hydroxy-4-methyl-2-oxoglutarate (HMG) into 2 molecules of pyruvate. Also contains a secondary oxaloacetate (OAA) decarboxylase activity due to the common pyruvate enolate transition state formed following C-C bond cleavage in the retro-aldol and decarboxylation reactions. This chain is Putative 4-hydroxy-4-methyl-2-oxoglutarate aldolase, found in Mycobacterium sp. (strain KMS).